The chain runs to 231 residues: Enolase-phosphatase E1 (231 aa).

Residues 206–231 form a disordered region; that stretch reads LLERPGNAPQPKHSHPKISSFENFNP.

It belongs to the HAD-like hydrolase superfamily. MasA/MtnC family. Monomer. It depends on Mg(2+) as a cofactor.

The enzyme catalyses 5-methylsulfanyl-2,3-dioxopentyl phosphate + H2O = 1,2-dihydroxy-5-(methylsulfanyl)pent-1-en-3-one + phosphate. The protein operates within amino-acid biosynthesis; L-methionine biosynthesis via salvage pathway; L-methionine from S-methyl-5-thio-alpha-D-ribose 1-phosphate: step 3/6. It participates in amino-acid biosynthesis; L-methionine biosynthesis via salvage pathway; L-methionine from S-methyl-5-thio-alpha-D-ribose 1-phosphate: step 4/6. In terms of biological role, bifunctional enzyme that catalyzes the enolization of 2,3-diketo-5-methylthiopentyl-1-phosphate (DK-MTP-1-P) into the intermediate 2-hydroxy-3-keto-5-methylthiopentenyl-1-phosphate (HK-MTPenyl-1-P), which is then dephosphorylated to form the acireductone 1,2-dihydroxy-3-keto-5-methylthiopentene (DHK-MTPene). This is Enolase-phosphatase E1 from Leptospira borgpetersenii serovar Hardjo-bovis (strain JB197).